The primary structure comprises 229 residues: Leucyl/phenylalanyl-tRNA--protein transferase (229 aa).

It belongs to the L/F-transferase family.

It localises to the cytoplasm. The enzyme catalyses N-terminal L-lysyl-[protein] + L-leucyl-tRNA(Leu) = N-terminal L-leucyl-L-lysyl-[protein] + tRNA(Leu) + H(+). It carries out the reaction N-terminal L-arginyl-[protein] + L-leucyl-tRNA(Leu) = N-terminal L-leucyl-L-arginyl-[protein] + tRNA(Leu) + H(+). It catalyses the reaction L-phenylalanyl-tRNA(Phe) + an N-terminal L-alpha-aminoacyl-[protein] = an N-terminal L-phenylalanyl-L-alpha-aminoacyl-[protein] + tRNA(Phe). Functions in the N-end rule pathway of protein degradation where it conjugates Leu, Phe and, less efficiently, Met from aminoacyl-tRNAs to the N-termini of proteins containing an N-terminal arginine or lysine. The chain is Leucyl/phenylalanyl-tRNA--protein transferase from Desulforapulum autotrophicum (strain ATCC 43914 / DSM 3382 / VKM B-1955 / HRM2) (Desulfobacterium autotrophicum).